The chain runs to 343 residues: MAKIDNAVLPEGSLVLVTGANGFVASHVVEQLLEHGYKVRGTARSASKLANLQKRWDAKYPGRFETAVVEDMLKQGAYDEVIKGAAGVAHIASVVSFSNKYDEVVTPAIGGTLNALRAAAATPSVKRFVLTSSTVSALIPKPNVEGIYLDEKSWNLESIDKAKTLPESDPQKSLWVYAASKTEAELAAWKFMDENKPHFTLNAVLPNYTIGTIFDPETQSGSTSGWMMSLFNGEVSPALALMPPQYYVSAVDIGLLHLGCLVLPQIERRRVYGTAGTFDWNTVLATFRKLYPSKTFPADFPDQGQDLSKFDTAPSLEILKSLGRPGWRSIEESIKDLVGSETA.

Residue Tyr177 coordinates NADP(+).

The protein belongs to the NAD(P)-dependent epimerase/dehydratase family. Dihydroflavonol-4-reductase subfamily. In terms of assembly, monomer.

The enzyme catalyses a primary alcohol + NADP(+) = an aldehyde + NADPH + H(+). With respect to regulation, inhibited by quercetin and diphenylhydantoin. Catalyzes the asymmetric reduction of o-substituted aliphatic and aromatic aldehydes and ketones to an S-enantiomer. Reduces ethyl 4-chloro-3-oxobutanoate to ethyl (S)-4-chloro-3-hydroxybutanoate. This is Aldehyde reductase 2 from Sporidiobolus salmonicolor (Yeast-like fungus).